Reading from the N-terminus, the 434-residue chain is Mitochondrial distribution and morphology protein 12 (434 aa).

Residues Met-1–Val-434 form the SMP-LTD domain. The segment covering Tyr-70–Glu-83 has biased composition (acidic residues). 2 disordered regions span residues Tyr-70 to Pro-141 and Thr-181 to Pro-275. Residues Ser-86–Ser-97 are compositionally biased toward basic and acidic residues. Residues Ser-215–Ser-237 show a composition bias toward polar residues.

Belongs to the MDM12 family. As to quaternary structure, component of the ER-mitochondria encounter structure (ERMES) or MDM complex, composed of MMM1, MDM10, MDM12 and MDM34. An MMM1 homodimer associates with one molecule of MDM12 on each side in a pairwise head-to-tail manner, and the SMP-LTD domains of MMM1 and MDM12 generate a continuous hydrophobic tunnel for phospholipid trafficking.

The protein localises to the mitochondrion outer membrane. Its subcellular location is the endoplasmic reticulum membrane. Component of the ERMES/MDM complex, which serves as a molecular tether to connect the endoplasmic reticulum (ER) and mitochondria. Components of this complex are involved in the control of mitochondrial shape and protein biogenesis, and function in nonvesicular lipid trafficking between the ER and mitochondria. MDM12 is required for the interaction of the ER-resident membrane protein MMM1 and the outer mitochondrial membrane-resident beta-barrel protein MDM10. The MDM12-MMM1 subcomplex functions in the major beta-barrel assembly pathway that is responsible for biogenesis of all mitochondrial outer membrane beta-barrel proteins, and acts in a late step after the SAM complex. The MDM10-MDM12-MMM1 subcomplex further acts in the TOM40-specific pathway after the action of the MDM12-MMM1 complex. Essential for establishing and maintaining the structure of mitochondria and maintenance of mtDNA nucleoids. The chain is Mitochondrial distribution and morphology protein 12 from Blastomyces gilchristii (strain SLH14081) (Blastomyces dermatitidis).